The primary structure comprises 207 residues: UPF0126 inner membrane protein YadS (207 aa).

Residues Met1–Leu21 traverse the membrane as a helical segment. Residues Ala22–Pro29 lie on the Cytoplasmic side of the membrane. Residues Phe30–Ala50 form a helical membrane-spanning segment. The Periplasmic segment spans residues Leu51–Trp58. Residues Val59 to Val79 form a helical membrane-spanning segment. Residues Arg80–Leu85 are Cytoplasmic-facing. The chain crosses the membrane as a helical span at residues Pro86–Val106. The Periplasmic portion of the chain corresponds to Asn107–Ala112. Residues Glu113 to Ile133 traverse the membrane as a helical segment. The Cytoplasmic portion of the chain corresponds to Arg134–Glu148. The chain crosses the membrane as a helical span at residues Ile149–Ser169. A topological domain (periplasmic) is located at residue Val170. A helical transmembrane segment spans residues Pro171–Ile191. At Arg192–Arg207 the chain is on the cytoplasmic side.

The protein belongs to the UPF0126 family.

It is found in the cell inner membrane. The protein is UPF0126 inner membrane protein YadS (yadS) of Escherichia coli O6:H1 (strain CFT073 / ATCC 700928 / UPEC).